The sequence spans 183 residues: Protein Syd (183 aa).

It belongs to the Syd family.

The protein resides in the cell inner membrane. In terms of biological role, interacts with the SecY protein in vivo. May bind preferentially to an uncomplexed state of SecY, thus functioning either as a chelating agent for excess SecY in the cell or as a regulatory factor that negatively controls the translocase function. The polypeptide is Protein Syd (Yersinia pestis bv. Antiqua (strain Antiqua)).